We begin with the raw amino-acid sequence, 479 residues long: Protein TRIGALACTOSYLDIACYLGLYCEROL 4, chloroplastic (479 aa).

The hydrophobic stretch at 288–310 (VFLSSPHVAVSGIIGSVMTAAFG) threads the membrane.

Homodimer. Forms dimeric beta-barrel. Interacts with TGD5.

Its subcellular location is the plastid. It localises to the chloroplast outer membrane. The protein localises to the endoplasmic reticulum. Involved in lipid transfer from the endoplasmic reticulum (ER) to plastids. Specifically binds phosphatidic acid (PtdOH). In Arabidopsis thaliana (Mouse-ear cress), this protein is Protein TRIGALACTOSYLDIACYLGLYCEROL 4, chloroplastic.